We begin with the raw amino-acid sequence, 532 residues long: Protein DETOXIFICATION 48 (532 aa).

Helical transmembrane passes span 65–85 (ISGPTAMTGLLMYSRAMISML), 95–115 (LAGGSLSIGFANITGYSVISG), 136–156 (LGLTLQRTVLLLLSCSVPISF), 174–194 (ISSVAQQFLLFAIPDLFLLSL), 211–231 (VTYSTAVSVLLHVPLNYLLVV), 235–255 (MGVAGVAIAMVLTNLNLVVLL), 279–301 (GWSALLSLAIPTCVSVCLEWWWY), 322–342 (GILIQTTALVYVFPSSLSLGV), 363–383 (IISLFCAIALGLMAMVFAVLV), 397–417 (ILQLTSIALPIVGLCELGNCP), 437–457 (INLGSFYFVGMPVAILFGFVF), and 464–484 (LWFGLLAAQATCASLMLCALL). Residues 496-532 (EELTSQTPGKSPPLLPIASSKSRSTSGTEDMMRTMLV) are disordered. Polar residues predominate over residues 514 to 523 (SSKSRSTSGT).

It belongs to the multi antimicrobial extrusion (MATE) (TC 2.A.66.1) family. As to expression, highly expressed in shoot apices relative to leaves. At vegetative stages, highly expressed at the stipules. At reproductive stages, most highly expressed in the mature pollen. Also expressed in the tips of sepals.

The protein resides in the golgi apparatus membrane. The protein localises to the late endosome membrane. Its function is as follows. Functions as a multidrug and toxin extrusion transporter. Contributes to iron homeostasis during stress responses and senescence. Could be involved in specifying the lateral organ initiation rate. May act as a negative regulator of hypocotyl cell elongation in the light. This chain is Protein DETOXIFICATION 48, found in Arabidopsis thaliana (Mouse-ear cress).